We begin with the raw amino-acid sequence, 456 residues long: ATP-dependent protease ATPase subunit HslU (456 aa).

Residues Ile18, 60 to 65 (GVGKTE), Asp270, Glu334, and Arg406 each bind ATP.

This sequence belongs to the ClpX chaperone family. HslU subfamily. A double ring-shaped homohexamer of HslV is capped on each side by a ring-shaped HslU homohexamer. The assembly of the HslU/HslV complex is dependent on binding of ATP.

The protein resides in the cytoplasm. In terms of biological role, ATPase subunit of a proteasome-like degradation complex; this subunit has chaperone activity. The binding of ATP and its subsequent hydrolysis by HslU are essential for unfolding of protein substrates subsequently hydrolyzed by HslV. HslU recognizes the N-terminal part of its protein substrates and unfolds these before they are guided to HslV for hydrolysis. This is ATP-dependent protease ATPase subunit HslU from Exiguobacterium sibiricum (strain DSM 17290 / CCUG 55495 / CIP 109462 / JCM 13490 / 255-15).